Here is a 206-residue protein sequence, read N- to C-terminus: Small ribosomal subunit protein uS4 (206 aa).

An S4 RNA-binding domain is found at 96–156 (GRLDNVVYRM…EKSKKQARIK (61 aa)).

It belongs to the universal ribosomal protein uS4 family. As to quaternary structure, part of the 30S ribosomal subunit. Contacts protein S5. The interaction surface between S4 and S5 is involved in control of translational fidelity.

Functionally, one of the primary rRNA binding proteins, it binds directly to 16S rRNA where it nucleates assembly of the body of the 30S subunit. In terms of biological role, with S5 and S12 plays an important role in translational accuracy. The sequence is that of Small ribosomal subunit protein uS4 from Actinobacillus succinogenes (strain ATCC 55618 / DSM 22257 / CCUG 43843 / 130Z).